Consider the following 649-residue polypeptide: MGVLARIQTPDDLRQLNSAEMKQLAAEIREFLVQKVAATGGHLGPNLGVVELTLALHRIFDSPADPIIFDTGHQAYVHKILTGRKDDFDSLRKQGGLSGYPCRAESDHDWVESSHASASLSYADGLAKAFELTGQDRHVVAVVGDGALTGGMCWEALNNIAAGKDRSVVIVVNDNGRSYAPTIGGLADHLAALRLQPGYERILDSGRRMVKKLPWVGRTAYSVLHGMKAGLKDAVAPQVMFTDLGIKYLGPVDGHDEAALESALRRAKAFGGPVIVHAVTRKGMGYAPAENHVADQMHSTGVIDPITGRGTGSASADWTSVFSAELIDQASHRQDIVAITAAMAGPTGLAAFGEKYPDRMFDVGIAEQHAVTSAAGLALGGLHPVVAVYSTFLNRAFDQLLMDVALLKLPVTLVLDRAGITGNDGASHNGMWDMSLLGIVPGMKVAAPRDTATLREELDEALAVDDGPTALRFPKGTVGDDVPAVSRLDGVVDILRAPSGRNDVLIVSVGAFAGLALAAAERLEQQGISATVVDPRWVLPVPESLVKLAEDYTMVVTVEDSGLHGGVGSTVSAALRAAGVDVPCRDLGVPQQFLDHASRAQIHAELGLTAQDVARQITGWFAGLGNLRPEQQNGVVADLDAQRAEKQQG.

Residues His-73 and 114–116 (SHA) contribute to the thiamine diphosphate site. A Mg(2+)-binding site is contributed by Asp-145. Residues 146–147 (GA), Asn-175, Tyr-286, and Glu-367 contribute to the thiamine diphosphate site. Residue Asn-175 participates in Mg(2+) binding.

The protein belongs to the transketolase family. DXPS subfamily. Homodimer. Requires Mg(2+) as cofactor. Thiamine diphosphate is required as a cofactor.

It catalyses the reaction D-glyceraldehyde 3-phosphate + pyruvate + H(+) = 1-deoxy-D-xylulose 5-phosphate + CO2. The protein operates within metabolic intermediate biosynthesis; 1-deoxy-D-xylulose 5-phosphate biosynthesis; 1-deoxy-D-xylulose 5-phosphate from D-glyceraldehyde 3-phosphate and pyruvate: step 1/1. Functionally, catalyzes the acyloin condensation reaction between C atoms 2 and 3 of pyruvate and glyceraldehyde 3-phosphate to yield 1-deoxy-D-xylulose-5-phosphate (DXP). This Rhodococcus jostii (strain RHA1) protein is 1-deoxy-D-xylulose-5-phosphate synthase.